Consider the following 249-residue polypeptide: ATP-dependent dethiobiotin synthetase BioD (249 aa).

ATP is bound at residue 11–16 (NVGKTI). Thr-15 contacts Mg(2+). Residue Lys-31 is part of the active site. Thr-35 is a substrate binding site. Residues Asp-40, 127 to 130 (EGAG), 188 to 189 (NS), and 215 to 217 (PYL) each bind ATP. 2 residues coordinate Mg(2+): Asp-40 and Glu-127.

Belongs to the dethiobiotin synthetase family. In terms of assembly, homodimer. Mg(2+) is required as a cofactor.

The protein localises to the cytoplasm. It catalyses the reaction (7R,8S)-7,8-diammoniononanoate + CO2 + ATP = (4R,5S)-dethiobiotin + ADP + phosphate + 3 H(+). It participates in cofactor biosynthesis; biotin biosynthesis; biotin from 7,8-diaminononanoate: step 1/2. Catalyzes a mechanistically unusual reaction, the ATP-dependent insertion of CO2 between the N7 and N8 nitrogen atoms of 7,8-diaminopelargonic acid (DAPA, also called 7,8-diammoniononanoate) to form a ureido ring. This chain is ATP-dependent dethiobiotin synthetase BioD, found in Neorickettsia sennetsu (strain ATCC VR-367 / Miyayama) (Ehrlichia sennetsu).